A 311-amino-acid chain; its full sequence is Aspartate carbamoyltransferase catalytic subunit (311 aa).

Carbamoyl phosphate contacts are provided by Arg55 and Thr56. An L-aspartate-binding site is contributed by Lys83. Carbamoyl phosphate contacts are provided by Arg105, His133, and Gln136. The L-aspartate site is built by Arg166 and Arg220. The carbamoyl phosphate site is built by Gly261 and Pro262.

Belongs to the aspartate/ornithine carbamoyltransferase superfamily. ATCase family. In terms of assembly, heterododecamer (2C3:3R2) of six catalytic PyrB chains organized as two trimers (C3), and six regulatory PyrI chains organized as three dimers (R2).

It catalyses the reaction carbamoyl phosphate + L-aspartate = N-carbamoyl-L-aspartate + phosphate + H(+). It participates in pyrimidine metabolism; UMP biosynthesis via de novo pathway; (S)-dihydroorotate from bicarbonate: step 2/3. Its function is as follows. Catalyzes the condensation of carbamoyl phosphate and aspartate to form carbamoyl aspartate and inorganic phosphate, the committed step in the de novo pyrimidine nucleotide biosynthesis pathway. This Chlorobium chlorochromatii (strain CaD3) protein is Aspartate carbamoyltransferase catalytic subunit.